The following is a 352-amino-acid chain: Peptide chain release factor 1 (352 aa).

Position 233 is an N5-methylglutamine (Gln233). Positions 288–309 (NAKDRKEQVGSGDRSERIRTYN) are disordered. The span at 289 to 306 (AKDRKEQVGSGDRSERIR) shows a compositional bias: basic and acidic residues.

Belongs to the prokaryotic/mitochondrial release factor family. In terms of processing, methylated by PrmC. Methylation increases the termination efficiency of RF1.

It is found in the cytoplasm. Its function is as follows. Peptide chain release factor 1 directs the termination of translation in response to the peptide chain termination codons UAG and UAA. The protein is Peptide chain release factor 1 (prfA) of Helicobacter pylori (strain ATCC 700392 / 26695) (Campylobacter pylori).